Consider the following 873-residue polypeptide: MLSIAKRVFWPYSSRAKGASVHKIVKSINALEGEMAALSSEALFGKTGEFRKMLSEGTVTLDDLLVPAFAVVREASRRVLDMRHFDVQLIGGIALHRGMIAEMKTGEGKTLVATLAAYLNALESKGVHVVTVNDYLAERDSEWMGKLYSALGISVGCITSSSSDEARKAAYNCDILYSTNNELGFDYLRDNMKFSRENMVQRGYNYAIVDEVDSILIDESRTPLIISGPVERDSSLYGKVDALVRDLEQEDYDIDEKSKTAFLTEDGALKVEQLLISHQLIPEGSSLYSAENIIMMHYVGQALRAHKLYFADKDYIVKNGSVVIIDEFTGRMMDGRRYSDGLHQALEAKEGVRINNENQTLASTTFQNYFRMYKRLSGMTGTAETEADEFLGTYNLQVMQIPTNVPVQRVDLDDDIYCTEEEKYEAVIDFIIECHKRKQPTLVGTISIEKSELLSKLLTMRGIKHSVLNARYHEKEAYIIAQAGKPGAVTIATNMAGRGTDIKLGGNPEMLARNELAGITDEEERAKRINKIIEQAKHDKEIVMQAGGLCIIGTERHESRRIDNQLRGRSGRQGDPGLSKFFLSLEDGLLRIFGSDKVRGMLKRLGMKRGEAIQHKWINRAIERAQKKVEARNYDIRKSLLRFDDVINEQRKVIFAQRNQILDRETYDLVPFYSNLNCDIVSRIIKEKYCDLGHRETAEELSAEVTRIYGIELDIGALSALETREEVIAYLDKVADDLLKKKADGFVHKDENLWDFAARRVLITSLDHLWTDHLAALDSLKCGINLRSVGQKDPLNEFKIEAFYLLEKMLSRFYEMVIQKLAHIELEVQQQPDDGMINLNNSTSQLFGGIARNDRCPCGSGKKFKHCHGMIKV.

ATP is bound by residues Q88, 106 to 110, and D501; that span reads GEGKT. Positions 856, 858, 867, and 868 each coordinate Zn(2+).

This sequence belongs to the SecA family. In terms of assembly, monomer and homodimer. Part of the essential Sec protein translocation apparatus which comprises SecA, SecYEG and auxiliary proteins SecDF-YajC and YidC. Zn(2+) is required as a cofactor.

It is found in the cell inner membrane. The protein resides in the cytoplasm. It catalyses the reaction ATP + H2O + cellular proteinSide 1 = ADP + phosphate + cellular proteinSide 2.. Its function is as follows. Part of the Sec protein translocase complex. Interacts with the SecYEG preprotein conducting channel. Has a central role in coupling the hydrolysis of ATP to the transfer of proteins into and across the cell membrane, serving both as a receptor for the preprotein-SecB complex and as an ATP-driven molecular motor driving the stepwise translocation of polypeptide chains across the membrane. This chain is Protein translocase subunit SecA, found in Anaplasma phagocytophilum (strain HZ).